Consider the following 270-residue polypeptide: Large ribosomal subunit protein uL10 (270 aa).

The segment at 234 to 270 is disordered; the sequence is VTELEAGKTRPKREGNRRQAMNGDEMDEDQSSDEDSD. Residues 238-250 show a composition bias toward basic and acidic residues; it reads EAGKTRPKREGNR. Positions 257-270 are enriched in acidic residues; it reads DEMDEDQSSDEDSD.

It belongs to the universal ribosomal protein uL10 family. Associates with the pre-60S ribosomal particle.

Its subcellular location is the nucleus. The protein localises to the nucleolus. The protein resides in the cytoplasm. In terms of biological role, component of the ribosome assembly machinery. Nuclear paralog of the ribosomal protein P0, it binds pre-60S subunits at an early stage of assembly in the nucleolus, and is replaced by P0 in cytoplasmic pre-60S subunits and mature 80S ribosomes. The sequence is that of Large ribosomal subunit protein uL10 from Chaetomium thermophilum (strain DSM 1495 / CBS 144.50 / IMI 039719) (Thermochaetoides thermophila).